Here is a 37-residue protein sequence, read N- to C-terminus: Large ribosomal subunit protein bL36 (37 aa).

Belongs to the bacterial ribosomal protein bL36 family.

The polypeptide is Large ribosomal subunit protein bL36 (Pelotomaculum thermopropionicum (strain DSM 13744 / JCM 10971 / SI)).